Consider the following 95-residue polypeptide: MNLKPLADRVIVKPAPAEEKTKGGLYIPDTGKEKPQYGEVVAVGEGKVADNGQLVQMQVKVGDKVLYGKYSGTEVQVEAEDYLIMRESDIFAILG.

This sequence belongs to the GroES chaperonin family. Heptamer of 7 subunits arranged in a ring. Interacts with the chaperonin GroEL.

It localises to the cytoplasm. Together with the chaperonin GroEL, plays an essential role in assisting protein folding. The GroEL-GroES system forms a nano-cage that allows encapsulation of the non-native substrate proteins and provides a physical environment optimized to promote and accelerate protein folding. GroES binds to the apical surface of the GroEL ring, thereby capping the opening of the GroEL channel. The polypeptide is Co-chaperonin GroES (Chlorobaculum parvum (strain DSM 263 / NCIMB 8327) (Chlorobium vibrioforme subsp. thiosulfatophilum)).